We begin with the raw amino-acid sequence, 134 residues long: Cell division protein SepF (134 aa).

Belongs to the SepF family. In terms of assembly, homodimer. Interacts with FtsZ.

It is found in the cytoplasm. Cell division protein that is part of the divisome complex and is recruited early to the Z-ring. Probably stimulates Z-ring formation, perhaps through the cross-linking of FtsZ protofilaments. Its function overlaps with FtsA. In Caldanaerobacter subterraneus subsp. tengcongensis (strain DSM 15242 / JCM 11007 / NBRC 100824 / MB4) (Thermoanaerobacter tengcongensis), this protein is Cell division protein SepF.